The sequence spans 406 residues: Cysteine desulfurase (406 aa).

Position 226 is an N6-(pyridoxal phosphate)lysine (lysine 226). Cysteine 364 (cysteine persulfide intermediate) is an active-site residue.

The protein belongs to the class-V pyridoxal-phosphate-dependent aminotransferase family. Csd subfamily. In terms of assembly, homodimer. Interacts with SufE and the SufBCD complex composed of SufB, SufC and SufD. The interaction with SufE is required to mediate the direct transfer of the sulfur atom from the S-sulfanylcysteine. Requires pyridoxal 5'-phosphate as cofactor.

The protein resides in the cytoplasm. The enzyme catalyses (sulfur carrier)-H + L-cysteine = (sulfur carrier)-SH + L-alanine. The catalysed reaction is L-selenocysteine + AH2 = hydrogenselenide + L-alanine + A + H(+). Its pathway is cofactor biosynthesis; iron-sulfur cluster biosynthesis. Functionally, cysteine desulfurases mobilize the sulfur from L-cysteine to yield L-alanine, an essential step in sulfur metabolism for biosynthesis of a variety of sulfur-containing biomolecules. Component of the suf operon, which is activated and required under specific conditions such as oxidative stress and iron limitation. Acts as a potent selenocysteine lyase in vitro, that mobilizes selenium from L-selenocysteine. Selenocysteine lyase activity is however unsure in vivo. The polypeptide is Cysteine desulfurase (Shigella sonnei (strain Ss046)).